A 382-amino-acid polypeptide reads, in one-letter code: Bifunctional enzyme IspD/IspF (382 aa).

Residues 1–226 are 2-C-methyl-D-erythritol 4-phosphate cytidylyltransferase; it reads MTLAVLIVAA…RSTMDNIPDI (226 aa). The segment at 227–382 is 2-C-methyl-D-erythritol 2,4-cyclodiphosphate synthase; it reads RLGNGYDVHR…ALATATLVRA (156 aa). A divalent metal cation-binding residues include D233 and H235. 4-CDP-2-C-methyl-D-erythritol 2-phosphate is bound by residues 233–235 and 259–260; these read DVH and HS. Residue H267 coordinates a divalent metal cation. Residues 281 to 283, 357 to 360, F364, and R367 contribute to the 4-CDP-2-C-methyl-D-erythritol 2-phosphate site; these read DIG and TTSE.

The protein in the N-terminal section; belongs to the IspD/TarI cytidylyltransferase family. IspD subfamily. This sequence in the C-terminal section; belongs to the IspF family. A divalent metal cation serves as cofactor.

The catalysed reaction is 2-C-methyl-D-erythritol 4-phosphate + CTP + H(+) = 4-CDP-2-C-methyl-D-erythritol + diphosphate. It carries out the reaction 4-CDP-2-C-methyl-D-erythritol 2-phosphate = 2-C-methyl-D-erythritol 2,4-cyclic diphosphate + CMP. It functions in the pathway isoprenoid biosynthesis; isopentenyl diphosphate biosynthesis via DXP pathway; isopentenyl diphosphate from 1-deoxy-D-xylulose 5-phosphate: step 2/6. The protein operates within isoprenoid biosynthesis; isopentenyl diphosphate biosynthesis via DXP pathway; isopentenyl diphosphate from 1-deoxy-D-xylulose 5-phosphate: step 4/6. In terms of biological role, bifunctional enzyme that catalyzes the formation of 4-diphosphocytidyl-2-C-methyl-D-erythritol from CTP and 2-C-methyl-D-erythritol 4-phosphate (MEP) (IspD), and catalyzes the conversion of 4-diphosphocytidyl-2-C-methyl-D-erythritol 2-phosphate (CDP-ME2P) to 2-C-methyl-D-erythritol 2,4-cyclodiphosphate (ME-CPP) with a corresponding release of cytidine 5-monophosphate (CMP) (IspF). The sequence is that of Bifunctional enzyme IspD/IspF from Ruegeria sp. (strain TM1040) (Silicibacter sp.).